We begin with the raw amino-acid sequence, 133 residues long: Small ribosomal subunit protein uS8 (133 aa).

This sequence belongs to the universal ribosomal protein uS8 family. As to quaternary structure, part of the 30S ribosomal subunit. Contacts proteins S5 and S12.

Its function is as follows. One of the primary rRNA binding proteins, it binds directly to 16S rRNA central domain where it helps coordinate assembly of the platform of the 30S subunit. The protein is Small ribosomal subunit protein uS8 of Anaplasma phagocytophilum (strain HZ).